Here is an 832-residue protein sequence, read N- to C-terminus: METNPRKLRSYSYICLIVCIFVLVVCAILSRAEEKEGKGENDDHIPKIYSILVEGEPLAFRASTNINSKAMALEAKKIEEIHDEILGSTLEKGSYTKLYSFKHVINAIAVRTTASQAKKLGKTKGVKAVEEDKGVKLMTTYTPDFLELPQQVWQKISNEGDRRAGEDIVIGFVDTGINPTHPSFAALDLTNPYSSNLSRLHFSGDCEIGPFFPPGSCNGKIISARFFSAGARASGALNSSLDILSPFDASGHGSHVASIAAGNAGVPVIVDGFFYGRASGMAPRSRIAVYKAIYPSIGTLVDVIAAIDQAIMDGVDVLTLSVGPDEPPVDKPTVLGIFDLAMLLARKAGVFVVQAVGNNGPSPSSVLSYSPWVVGVAAGNTDRSYPAPLILDGGQTVQGVGLSGPTLGAPLVQHRLVLAKDAVRTNGSVLQPLTRDIEECQRPENFDPAAVFGSIVICTFSDGFYNQMSTVLAITQTARTLGFMGFILIANPRFGDYVAEPVIFSAPGILIPTVSAAQIILRYYEEKTFRDTRGVATQFGARARIGEGRNSVFAGKAPVVSRFSSRGPAFIDATRSPLDVLKPDILAPGHQIWGAWSLPSAFDPILTGRSFAILSGTSMATPHIAGIGALIKQLNPSWTPAMIASAISTTANEYDSNGEIISAEYYELSRLFPSNHFDHGAGHVNPARALDPGLVLPAGFEDYISFLCSLPNISPATIRDATGVLCTTTLSHPANLNHPSVTISALKESLVVRRSFQDVSNKTETYLGSVLPPNGTTVRLTPTWFTVPPQKTQDLDIEFNVTQVLNKFTFGEVVLTGSLNHIIRIPLSVKTI.

The N-terminal stretch at 1-27 (METNPRKLRSYSYICLIVCIFVLVVCA) is a signal peptide. One can recognise an Inhibitor I9 domain in the interval 74-138 (EAKKIEEIHD…VEEDKGVKLM (65 aa)). In terms of domain architecture, Peptidase S8 spans 150–690 (QQVWQKISNE…AGHVNPARAL (541 aa)). Residue aspartate 174 is the Charge relay system of the active site. Asparagine 196 and asparagine 238 each carry an N-linked (GlcNAc...) asparagine glycan. The active-site Charge relay system is histidine 252. Positions 425–524 (TNGSVLQPLT…SAAQIILRYY (100 aa)) constitute a PA domain. Asparagine 426 carries N-linked (GlcNAc...) asparagine glycosylation. The Charge relay system role is filled by serine 618. N-linked (GlcNAc...) asparagine glycosylation is found at asparagine 761, asparagine 774, and asparagine 800.

The protein belongs to the peptidase S8 family.

It localises to the secreted. Its function is as follows. Serine protease required for epidermal surface formation in embryos and juvenile plants. Involved in embryonic cuticle formation downstream of BHLH95/ZOU. The sequence is that of Subtilisin-like protease SBT2.4 from Arabidopsis thaliana (Mouse-ear cress).